We begin with the raw amino-acid sequence, 88 residues long: Small ribosomal subunit protein bS16 (88 aa).

It belongs to the bacterial ribosomal protein bS16 family.

The polypeptide is Small ribosomal subunit protein bS16 (Geobacter sp. (strain M21)).